Consider the following 892-residue polypeptide: Ice-binding protein 1 (892 aa).

The N-terminal stretch at 1-23 (MNHSIKKTYLVFTMLLGFILLAG) is a signal peptide. The N-palmitoyl cysteine moiety is linked to residue cysteine 24. Cysteine 24 is lipidated: S-diacylglycerol cysteine. BIG2 domains are found at residues 43 to 111 (TSIA…ITAS), 134 to 205 (TALA…SLGS), 221 to 288 (SIAL…ITAD), 306 to 386 (TSIM…TVTV), 392 to 471 (TSIA…TNLT), 478 to 558 (NSIV…NLTV), and 565 to 638 (SIDV…QASL). The Ice-binding site motif (T-A/G-X-T/N) motif lies at 866-869 (TGAN).

Belongs to the ice-binding protein family.

The protein localises to the cell outer membrane. Ice-binding adhesion protein that adsorbs this bacterium onto ice to maintain a favorable position in its aquatic habitat. Inhibits growth of the ice crystals. Has high thermal hysteresis (TH) activity, which is the ability to lower the freezing point of an aqueous solution below its melting point. The TH activity of this protein is approximately 1.4 degrees Celsius at 25 uM and little below 2 degrees Celsius at 80 uM. The sequence is that of Ice-binding protein 1 from Shewanella frigidimarina (strain NCIMB 400).